The following is a 262-amino-acid chain: Glucosamine-6-phosphate deaminase (262 aa).

The active-site Proton acceptor; for enolization step is the Asp63. Asn129 serves as the catalytic For ring-opening step. The active-site Proton acceptor; for ring-opening step is His131. Catalysis depends on Glu136, which acts as the For ring-opening step.

This sequence belongs to the glucosamine/galactosamine-6-phosphate isomerase family. NagB subfamily.

The catalysed reaction is alpha-D-glucosamine 6-phosphate + H2O = beta-D-fructose 6-phosphate + NH4(+). It functions in the pathway amino-sugar metabolism; N-acetylneuraminate degradation; D-fructose 6-phosphate from N-acetylneuraminate: step 5/5. In terms of biological role, catalyzes the reversible isomerization-deamination of glucosamine 6-phosphate (GlcN6P) to form fructose 6-phosphate (Fru6P) and ammonium ion. This chain is Glucosamine-6-phosphate deaminase, found in Bacillus cereus (strain G9842).